The sequence spans 37 residues: Large ribosomal subunit protein bL36 (37 aa).

It belongs to the bacterial ribosomal protein bL36 family.

In Campylobacter jejuni subsp. jejuni serotype O:6 (strain 81116 / NCTC 11828), this protein is Large ribosomal subunit protein bL36.